The primary structure comprises 911 residues: MALQGNLFGDAEPASSAPSKGQKRQDEPDQLDDHELTQDAKQRPRQRQGQQEHSEPSASSQSEEAHSEASTPAGKDQDNSDDDLPPWSHHSQVTPEQLTPMLRHYVELKAAHPERILLYRLGDFFECFFEDAIHLSRLLELTLTGKEAGKQIGRVPMAGIPHHAAERYCSELIRRGLSVALCDQLEAAPASGSAKGTLLRRDITRVLTPGTVLEEGLLSARRNNWLAAVVVEPAQGRQPFRWGLACADVSTGEFLVREQDNSAALHQELARLDPAELIHHNQNSVAPSWCPERLQRCDIGNTPFSQPEAEALLLERFRLQTLDGLGLQNVPLAMRAAGGLIAYLGETCPLDDNGITPPPLERPITCFPGDALVLDAQTRRNLELIATQRDNQFQGSLLWAIDRTLTAMGARCLRRWIEAPLMDPSIIRSRQASVSQLVSKRPLRQALRRLLRPMGDLERLAGRAGAGHAGARDLVAIADGLERLPQLANLITSQLDGGPSWLSDVLEPDPALAVIGASIRHQLMDNPPLSLSEGGLIHDGVDPLLDGLRNQLDDQESWLAEQEQLERQSSNNSNLKLQYHRTFGYFLSVSRARSGAVPDHWIRRQTLANEERFITPDLKAREGQIFQMRARAAQREYELFCELRGQIGEHAEAIRRSARAIAGLDALTSLAEAAATGGWCAPEITADRSMVIEQGRHPVVEQLLVEDAFTPNDSNLGTGIDLVVLTGPNASGKSCYLRQIGLIQLLAQIGSWVPAQAARIGIADRIFTRVGAVDDLAAGQSTFMVEMAETANILHHASERSLVLLDEIGRGTATFDGLSIAWAVSEHLAGDLQARTVFATHYHELNALAGERSNVANCQVLVEETGSDLVFLHRVAAGGASRSYGIEAARLAGVPASVVQRARQVLDQLAT.

Residues 1 to 95 are disordered; it reads MALQGNLFGD…PWSHHSQVTP (95 aa). Positions 23–42 are enriched in basic and acidic residues; it reads KRQDEPDQLDDHELTQDAKQ. 727–734 lines the ATP pocket; the sequence is GPNASGKS.

Belongs to the DNA mismatch repair MutS family.

This protein is involved in the repair of mismatches in DNA. It is possible that it carries out the mismatch recognition step. This protein has a weak ATPase activity. The polypeptide is DNA mismatch repair protein MutS (Synechococcus sp. (strain CC9311)).